The sequence spans 104 residues: MESCITVIGERDVVLGFRLLGIQHTIIAEGKDLLKKFLEVFQNPQCNIIIVSENVKNMMDKRTLRSVEISSKPLVVFIPLPGVREEETIEEMAKRILGIDIGNV.

This sequence belongs to the V-ATPase F subunit family. Has multiple subunits with at least A(3), B(3), C, D, E, F, H, I and proteolipid K(x).

It is found in the cell membrane. Component of the A-type ATP synthase that produces ATP from ADP in the presence of a proton gradient across the membrane. This chain is A-type ATP synthase subunit F, found in Thermoplasma acidophilum (strain ATCC 25905 / DSM 1728 / JCM 9062 / NBRC 15155 / AMRC-C165).